We begin with the raw amino-acid sequence, 2724 residues long: Eukaryotic translation initiation factor 2-alpha kinase 2 (2724 aa).

At 1–24 the chain is on the cytoplasmic side; the sequence is MLNMVDQKKGINNGSSTGVINNIN. A helical transmembrane segment spans residues 25–45; the sequence is GKIKNEFIFMYLIAAGGFSCV. The Extracellular segment spans residues 46–673; that stretch reads YKIKKKKSNK…KFYIKRHNQK (628 aa). A disordered region spans residues 112 to 153; the sequence is KRERRGRRKEQQREQMGDKRREKRQQQRREKRKEQNTNTKKR. Positions 120 to 146 are enriched in basic and acidic residues; sequence KEQQREQMGDKRREKRQQQRREKRKEQ. Residues 674–694 traverse the membrane as a helical segment; that stretch reads TYFFENIIFYHYIIMLFLDIE. The Cytoplasmic segment spans residues 695-718; the sequence is KYKNKFVSLFQYNLYRKLLKISKR. Residues 719-739 form a helical membrane-spanning segment; that stretch reads IVLMLHRIETNVICIFLLKHF. Residues 740 to 800 are Extracellular-facing; the sequence is EDYFIRKGIH…KKNIFNFFIE (61 aa). A helical transmembrane segment spans residues 801–821; the sequence is LFLNNIQINIFKKFEILYLII. The Cytoplasmic portion of the chain corresponds to 822–832; that stretch reads YFYNYFEKSKQ. A helical membrane pass occupies residues 833 to 853; sequence FDIEGIGDIIYVWLSLINLFY. The Extracellular segment spans residues 854-876; sequence DDKGKCIKILSKIFAKLNKKLYY. The helical transmembrane segment at 877–897 threads the bilayer; the sequence is VYWGKLYIIMNWTTIVDTIFI. Topologically, residues 898-908 are cytoplasmic; the sequence is RNVLSINREGN. The helical transmembrane segment at 909-929 threads the bilayer; the sequence is YYWVIIVLKMINYFVNVAYTL. Residues 930-996 lie on the Extracellular side of the membrane; it reads TRMDIFFIKV…KKNYDIYTKY (67 aa). A helical membrane pass occupies residues 997 to 1017; the sequence is AILFIYCFIIQAYYFDTLFNI. Topologically, residues 1018–2724 are cytoplasmic; sequence RSLESNEIAN…GDIFLPDKCP (1707 aa). Lys-2029 provides a ligand contact to ATP. Residues 2084 to 2719 enclose the Protein kinase domain; sequence KHYFTKCGIL…KIISAGDIFL (636 aa). Residues 2120–2155 are a coiled coil; the sequence is INTLNEENQNMFCKNKEKKEENYKKIDTNISQFSEK. Asp-2229 serves as the catalytic Proton acceptor. Residues 2479 to 2507 form a disordered region; it reads EKMDKNKIAAQKKKKKKENKHPIGRRSTN. Over residues 2488–2502 the composition is skewed to basic residues; it reads AQKKKKKKENKHPIG.

This sequence belongs to the protein kinase superfamily. Ser/Thr protein kinase family. GCN2 subfamily. Auto-phosphorylated.

Its subcellular location is the membrane. It carries out the reaction L-seryl-[protein] + ATP = O-phospho-L-seryl-[protein] + ADP + H(+). It catalyses the reaction L-threonyl-[protein] + ATP = O-phospho-L-threonyl-[protein] + ADP + H(+). Phosphorylates translation factor eIF2alpha in salivary gland sporozoites during dormancy, which leads to an inhibition of protein translation and accumulation of stalled mRNAs into granules. The polypeptide is Eukaryotic translation initiation factor 2-alpha kinase 2 (Plasmodium berghei (strain Anka)).